The sequence spans 333 residues: 4-hydroxy-3-methylbut-2-enyl diphosphate reductase (333 aa).

A [4Fe-4S] cluster-binding site is contributed by cysteine 33. (2E)-4-hydroxy-3-methylbut-2-enyl diphosphate is bound by residues histidine 62 and histidine 95. The dimethylallyl diphosphate site is built by histidine 62 and histidine 95. Isopentenyl diphosphate-binding residues include histidine 62 and histidine 95. Cysteine 117 contributes to the [4Fe-4S] cluster binding site. Histidine 145 lines the (2E)-4-hydroxy-3-methylbut-2-enyl diphosphate pocket. Histidine 145 contacts dimethylallyl diphosphate. Histidine 145 contributes to the isopentenyl diphosphate binding site. Glutamate 147 acts as the Proton donor in catalysis. Threonine 186 contacts (2E)-4-hydroxy-3-methylbut-2-enyl diphosphate. Cysteine 216 lines the [4Fe-4S] cluster pocket. (2E)-4-hydroxy-3-methylbut-2-enyl diphosphate is bound by residues serine 244, serine 245, asparagine 246, and serine 289. 4 residues coordinate dimethylallyl diphosphate: serine 244, serine 245, asparagine 246, and serine 289. Residues serine 244, serine 245, asparagine 246, and serine 289 each coordinate isopentenyl diphosphate.

It belongs to the IspH family. It depends on [4Fe-4S] cluster as a cofactor.

It catalyses the reaction isopentenyl diphosphate + 2 oxidized [2Fe-2S]-[ferredoxin] + H2O = (2E)-4-hydroxy-3-methylbut-2-enyl diphosphate + 2 reduced [2Fe-2S]-[ferredoxin] + 2 H(+). The catalysed reaction is dimethylallyl diphosphate + 2 oxidized [2Fe-2S]-[ferredoxin] + H2O = (2E)-4-hydroxy-3-methylbut-2-enyl diphosphate + 2 reduced [2Fe-2S]-[ferredoxin] + 2 H(+). It functions in the pathway isoprenoid biosynthesis; dimethylallyl diphosphate biosynthesis; dimethylallyl diphosphate from (2E)-4-hydroxy-3-methylbutenyl diphosphate: step 1/1. It participates in isoprenoid biosynthesis; isopentenyl diphosphate biosynthesis via DXP pathway; isopentenyl diphosphate from 1-deoxy-D-xylulose 5-phosphate: step 6/6. In terms of biological role, catalyzes the conversion of 1-hydroxy-2-methyl-2-(E)-butenyl 4-diphosphate (HMBPP) into a mixture of isopentenyl diphosphate (IPP) and dimethylallyl diphosphate (DMAPP). Acts in the terminal step of the DOXP/MEP pathway for isoprenoid precursor biosynthesis. The chain is 4-hydroxy-3-methylbut-2-enyl diphosphate reductase from Corynebacterium diphtheriae (strain ATCC 700971 / NCTC 13129 / Biotype gravis).